Reading from the N-terminus, the 362-residue chain is Serine/threonine-protein kinase ZRK4 (362 aa).

The tract at residues 1–23 (MNDQKMSCWRKKSKKKNSEANQR) is disordered. Residues 35-362 (LEDLIELCNG…KELKRIERWT (328 aa)) form the Protein kinase domain. ATP is bound by residues 41-49 (LCNGKSNPI) and Lys89. Asp185 acts as the Proton acceptor in catalysis.

This sequence belongs to the protein kinase superfamily. Ser/Thr protein kinase family. ZRK subfamily.

It carries out the reaction L-seryl-[protein] + ATP = O-phospho-L-seryl-[protein] + ADP + H(+). It catalyses the reaction L-threonyl-[protein] + ATP = O-phospho-L-threonyl-[protein] + ADP + H(+). The protein is Serine/threonine-protein kinase ZRK4 of Arabidopsis thaliana (Mouse-ear cress).